The chain runs to 227 residues: ATP-dependent Clp protease proteolytic subunit (227 aa).

Residue serine 120 is the Nucleophile of the active site. Histidine 145 is an active-site residue.

Belongs to the peptidase S14 family. In terms of assembly, fourteen ClpP subunits assemble into 2 heptameric rings which stack back to back to give a disk-like structure with a central cavity, resembling the structure of eukaryotic proteasomes.

It localises to the cytoplasm. The catalysed reaction is Hydrolysis of proteins to small peptides in the presence of ATP and magnesium. alpha-casein is the usual test substrate. In the absence of ATP, only oligopeptides shorter than five residues are hydrolyzed (such as succinyl-Leu-Tyr-|-NHMec, and Leu-Tyr-Leu-|-Tyr-Trp, in which cleavage of the -Tyr-|-Leu- and -Tyr-|-Trp bonds also occurs).. In terms of biological role, cleaves peptides in various proteins in a process that requires ATP hydrolysis. Has a chymotrypsin-like activity. Plays a major role in the degradation of misfolded proteins. This chain is ATP-dependent Clp protease proteolytic subunit, found in Rickettsia bellii (strain RML369-C).